We begin with the raw amino-acid sequence, 394 residues long: Glycerol-3-phosphate dehydrogenase [NAD(+)] 2 (394 aa).

NAD(+) contacts are provided by residues 41-46 (GSGNWG), Lys-152, and Ala-185. Residue Lys-152 coordinates substrate. The Proton acceptor role is filled by Lys-243. NAD(+) contacts are provided by Arg-308 and Gln-337. 308 to 309 (RN) provides a ligand contact to substrate.

It belongs to the NAD-dependent glycerol-3-phosphate dehydrogenase family.

The catalysed reaction is sn-glycerol 3-phosphate + NAD(+) = dihydroxyacetone phosphate + NADH + H(+). The polypeptide is Glycerol-3-phosphate dehydrogenase [NAD(+)] 2 (gpd2) (Cyberlindnera jadinii (Torula yeast)).